The chain runs to 59 residues: Small ribosomal subunit protein bS21 (59 aa).

Residues 35–59 form a disordered region; it reads REHYEKPSVKKKKKSEAAKRKKRNF. Positions 43-59 are enriched in basic residues; the sequence is VKKKKKSEAAKRKKRNF.

This sequence belongs to the bacterial ribosomal protein bS21 family.

This Finegoldia magna (strain ATCC 29328 / DSM 20472 / WAL 2508) (Peptostreptococcus magnus) protein is Small ribosomal subunit protein bS21.